The following is an 89-amino-acid chain: Translation initiation factor IF-1, chloroplastic (89 aa).

Residues 1 to 72 (MKKQDLIDME…TKGRIIYRLR (72 aa)) enclose the S1-like domain.

The protein belongs to the IF-1 family. Component of the 30S ribosomal translation pre-initiation complex which assembles on the 30S ribosome in the order IF-2 and IF-3, IF-1 and N-formylmethionyl-tRNA(fMet); mRNA recruitment can occur at any time during PIC assembly.

The protein localises to the plastid. It is found in the chloroplast. One of the essential components for the initiation of protein synthesis. Stabilizes the binding of IF-2 and IF-3 on the 30S subunit to which N-formylmethionyl-tRNA(fMet) subsequently binds. Helps modulate mRNA selection, yielding the 30S pre-initiation complex (PIC). Upon addition of the 50S ribosomal subunit IF-1, IF-2 and IF-3 are released leaving the mature 70S translation initiation complex. The polypeptide is Translation initiation factor IF-1, chloroplastic (Angiopteris evecta (Mule's foot fern)).